A 93-amino-acid chain; its full sequence is Large ribosomal subunit protein uL23cz/uL23cy (93 aa).

This sequence belongs to the universal ribosomal protein uL23 family. Part of the 50S ribosomal subunit.

Its subcellular location is the plastid. It is found in the chloroplast. Functionally, binds to 23S rRNA. This is Large ribosomal subunit protein uL23cz/uL23cy (rpl23-A) from Helianthus annuus (Common sunflower).